A 104-amino-acid polypeptide reads, in one-letter code: uncharacterized protein (104 aa).

This sequence to A.aeolicus AQ_377.

This is an uncharacterized protein from Archaeoglobus fulgidus (strain ATCC 49558 / DSM 4304 / JCM 9628 / NBRC 100126 / VC-16).